The sequence spans 955 residues: Protein translocase subunit SecA (955 aa).

ATP is bound by residues glutamine 90, 108 to 112 (GEGKT), and aspartate 509. Residues 537–571 (EGHRPPVPLQRSGAEGGGGFAAKAAPASGPHGHAP) form a disordered region. A compositionally biased stretch (low complexity) spans 557–571 (AAKAAPASGPHGHAP).

The protein belongs to the SecA family. In terms of assembly, monomer and homodimer. Part of the essential Sec protein translocation apparatus which comprises SecA, SecYEG and auxiliary proteins SecDF. Other proteins may also be involved.

Its subcellular location is the cell inner membrane. It localises to the cellular thylakoid membrane. The protein localises to the cytoplasm. It catalyses the reaction ATP + H2O + cellular proteinSide 1 = ADP + phosphate + cellular proteinSide 2.. Its function is as follows. Part of the Sec protein translocase complex. Interacts with the SecYEG preprotein conducting channel. Has a central role in coupling the hydrolysis of ATP to the transfer of proteins into and across the cell membrane, serving as an ATP-driven molecular motor driving the stepwise translocation of polypeptide chains across the membrane. In terms of biological role, probably participates in protein translocation into and across both the cytoplasmic and thylakoid membranes in cyanobacterial cells. The sequence is that of Protein translocase subunit SecA from Synechococcus sp. (strain WH7803).